A 163-amino-acid chain; its full sequence is tRNA-acetylating toxin 2 (163 aa).

Acetyl-CoA contacts are provided by L89, V91, H96, G97, Q98, G99, A101, R102, and E132. The active site involves Y137. R139 is a binding site for acetyl-CoA.

The protein belongs to the acetyltransferase family. GNAT subfamily. In terms of assembly, homodimer (in absence of antitoxin). Forms a complex with cognate antitoxin TacA2. Forms a 4:2 antitoxin:toxin complex with cognate antitoxin TacA2.

It carries out the reaction glycyl-tRNA(Gly) + acetyl-CoA = N-acetylglycyl-tRNA(Gly) + CoA + H(+). Functionally, toxic component of a type II toxin-antitoxin (TA) system. Acetylates tRNA and inhibits translation. Acetylates exclusively Gly in situ. Overexpression during the lag phase of a tacA2-tacT2 deletion strain leads to very small increase in persister cells in the presence of cefotaxime but no detectable growth phenotype in absence of antibiotics. Compared to a protein with a single amino acid change (TacT2 from S.enterica NCTC 13349, Glu-29 is Lys in NCTC 13349) this protein binds tRNA very poorly and acetylates tRNA very poorly. Persister cell formation is neutralized by cognate antitoxin TacA2. Neutralized only by cognate antitoxin TacA2 (A8), but not by TacA1 or TacA3. Plays a role in persister cell formation. The TacA2-TacT2 complex both represses and derepresses expression of its own operon. The polypeptide is tRNA-acetylating toxin 2 (Salmonella typhimurium (strain 14028s / SGSC 2262)).